A 448-amino-acid chain; its full sequence is MSTFRQEDVEDHYEMGEELGSGQFAIVRKCQQKGTGMEYAAKFIKKRRLPSSRRGVSREEIEREVSILREIRHPNIITLHDVFENKTDVVLILELVSGGELFDFLAEKESLTEDEATQFLKQILDGVHYLHSKRIAHFDLKPENIMLLDKHAASPRIKLIDFGIAHRIEAGSEFKNIFGTPEFVAPEIVNYEPLGLEADMWSIGVITYILLSGASPFLGETKQETLTNISAVNYDFDEEYFSSTSELAKDFIRRLLVKDPKRRMTIAQSLEHSWIKVRRREDGARKPERRRLRAARLREYSLKSHSSMPRNTSYASFERFSRVLEDVAAAEQGLRELQRGRRQCRERVCALRAAAEQREARCRDGSAGLGRDLRRLRTELGRTEALRTRAQEEARAALLGAGGLKRRLCRLENRYDALAAQVAAEVQFVRDLVRALEQERLQAECGVR.

Residues 13-275 (YEMGEELGSG…IAQSLEHSWI (263 aa)) form the Protein kinase domain. ATP-binding positions include 19-27 (LGSGQFAIV) and Lys42. The Proton acceptor role is filled by Asp139. The tract at residues 161–204 (DFGIAHRIEAGSEFKNIFGTPEFVAPEIVNYEPLGLEADMWSIG) is activation segment. Residues Thr180 and Thr225 each carry the phosphothreonine modification. Residue Thr265 is modified to Phosphothreonine; by autocatalysis. Thr265 is subject to Phosphothreonine; by ROCK1. Phosphoserine; by DAPK1 is present on Ser304. Residue Ser306 is modified to Phosphoserine; by autocatalysis and DAPK1. Residues Ser307, Ser313, and Ser321 each carry the phosphoserine; by DAPK1 modification. An interaction with CDC5L region spans residues 390–448 (AQEEARAALLGAGGLKRRLCRLENRYDALAAQVAAEVQFVRDLVRALEQERLQAECGVR). The interval 422–436 (VAAEVQFVRDLVRAL) is leucine-zipper.

It belongs to the protein kinase superfamily. CAMK Ser/Thr protein kinase family. DAP kinase subfamily. Homooligomer in its kinase-active form (homotrimers and homodimers are reported); monomeric in its kinase-inactive form. Homodimerization is required for activation segment autophosphorylation. Interacts with DAXX, PAWR, ATF4, NLK, TCF7L2, UBE2D1, UBE2D2, UBE2D3, and CDC5L. Interacts with AR; enhanced by AATF. Interacts with LUZP1; the interaction is likely to occur throughout the cell cycle and reduces the LUZP1-mediated suppression of MYL9 phosphorylation. Requires Mg(2+) as cofactor. In terms of processing, ubiquitinated. Ubiquitination mediated by the UBE2D3 E3 ligase does not lead to proteasomal degradation, but influences promyelocytic leukemia protein nuclear bodies (PML-NBs) formation in the nucleus. Post-translationally, the phosphorylation status is critical for kinase activity, oligomerization and intracellular localization. Phosphorylation at Thr-180, Thr-225 and Thr-265 is essential for activity. The phosphorylated form is localized in the cytoplasm and nuclear translocation or retention is maximal when it is not phosphorylated. Phosphorylation increases the trimeric form, and its dephosphorylation favors a kinase-inactive monomeric form. As to expression, highly expressed in heart, brain, lung, skeletal muscle, kidney and testis. Lower levels in liver and spleen.

It localises to the nucleus. It is found in the PML body. The protein localises to the cytoplasm. The protein resides in the cytoskeleton. Its subcellular location is the microtubule organizing center. It localises to the centrosome. It is found in the chromosome. The protein localises to the centromere. The protein resides in the spindle. Its subcellular location is the midbody. It carries out the reaction L-seryl-[protein] + ATP = O-phospho-L-seryl-[protein] + ADP + H(+). The catalysed reaction is L-threonyl-[protein] + ATP = O-phospho-L-threonyl-[protein] + ADP + H(+). A sequential activation is proposed: autophosphorylation at consensus sites is leading to dimerization of the catalytic domain and activation segment exchange (producing an active confirmation of both kinase modules in trans) followed by phosphorylation at Thr-180 in the activation segment and at other regulatory sites. Phosphorylation at Thr-180, Thr-225 and Thr-265 is essential for activity. Inhibited by pyridone 6 (K00225), a potent, ATP-competitive inhibitor. Phosphorylation at Thr-180, Thr-225 and Thr-265 is essential for activity. Functionally, serine/threonine kinase which is involved in the regulation of apoptosis, autophagy, transcription, translation and actin cytoskeleton reorganization. Regulates both type I (caspase-dependent) apoptotic and type II (caspase-independent) autophagic cell deaths signal, depending on the cellular setting. Involved in formation of promyelocytic leukemia protein nuclear body (PML-NB). Involved in apoptosis involving PAWR which mediates cytoplasmic relocation; in vitro phosphorylates PAWR. Regulates myosin phosphorylation in both smooth muscle and non-muscle cells. In smooth muscle, regulates myosin either directly by phosphorylating MYL12B and MYL9 or through inhibition of smooth muscle myosin phosphatase (SMPP1M) via phosphorylation of PPP1R12A; the inhibition of SMPP1M functions to enhance muscle responsiveness to Ca(2+) and promote a contractile state. Phosphorylates MYL12B in non-muscle cells leading to reorganization of actin cytoskeleton such as in regulation of cell polarity and cell migration. Positively regulates canonical Wnt/beta-catenin signaling through interaction with NLK and TCF7L2; disrupts the NLK-TCF7L2 complex thereby influencing the phosphorylation of TCF7L2 by NLK. Phosphorylates STAT3 and enhances its transcriptional activity. Enhances transcription from AR-responsive promoters in a hormone- and kinase-dependent manner. Phosphorylates histone H3 on 'Thr-11' at centromeres during mitosis. Phosphorylates RPL13A on 'Ser-77' upon interferon-gamma activation which is causing RPL13A release from the ribosome, RPL13A association with the GAIT complex and its subsequent involvement in transcript-selective translation inhibition. This is Death-associated protein kinase 3 (Dapk3) from Mus musculus (Mouse).